Consider the following 659-residue polypeptide: Zeaxanthin epoxidase, chloroplastic (659 aa).

Residues 1–50 constitute a chloroplast transit peptide; sequence MALLSATAPAKTRFSLFSHEEAQHPHPHALSACCGGGASGKRQRARARVA. Residues 79–107 and 357–370 contribute to the FAD site; these read RVLVAGGGIGGLVLALAARRKGYEVTVFE and TFNWGKGRVTLLGD. In terms of domain architecture, FHA spans 553 to 607; the sequence is LSIGSRSDPSNSTASLALPLPQISENHATITCKNKAFYVTDNGSEHGTWITDNEG.

FAD is required as a cofactor. In terms of tissue distribution, expressed in young microspores.

The protein resides in the plastid. Its subcellular location is the chloroplast membrane. It localises to the chloroplast thylakoid membrane. The catalysed reaction is all-trans-zeaxanthin + 4 reduced [2Fe-2S]-[ferredoxin] + 2 O2 + 4 H(+) = all-trans-violaxanthin + 4 oxidized [2Fe-2S]-[ferredoxin] + 2 H2O. It participates in plant hormone biosynthesis; abscisate biosynthesis. Functionally, zeaxanthin epoxidase that plays an important role in the xanthophyll cycle and abscisic acid (ABA) biosynthesis. Converts zeaxanthin into antheraxanthin and subsequently violaxanthin. Required for resistance to osmotic and drought stresses, seed development and dormancy. This Oryza sativa subsp. japonica (Rice) protein is Zeaxanthin epoxidase, chloroplastic (ZEP).